A 126-amino-acid chain; its full sequence is MSDPRYQVDVSVVTRFLADQSQPEQNRFAFAYTITVQNNGSLPAKLLSRHWVITDGDGHVEEVRGAGVVGQQPLIAAGKSHTYSSGTVMTTRVGNMQGSYQMLAEDGKQFDAVIAPFRLAVPGALH.

In terms of domain architecture, ApaG spans 2–126 (SDPRYQVDVS…FRLAVPGALH (125 aa)).

The chain is Protein ApaG from Pseudomonas fluorescens (strain ATCC BAA-477 / NRRL B-23932 / Pf-5).